The primary structure comprises 273 residues: Tryptase (273 aa).

The N-terminal stretch at 1-18 is a signal peptide; that stretch reads MLKLLLLTLPLLSSLVHA. The propeptide at 19-28 is activation peptide; sequence APSLAMPREG. The Peptidase S1 domain occupies 29 to 270; the sequence is IVGGQEASGN…YLDWIYRYVP (242 aa). The N-linked (GlcNAc...) asparagine glycan is linked to asparagine 49. The cysteines at positions 57 and 73 are disulfide-linked. Catalysis depends on charge relay system residues histidine 72 and aspartate 119. 3 disulfide bridges follow: cysteine 153/cysteine 228, cysteine 186/cysteine 209, and cysteine 218/cysteine 246. Serine 222 acts as the Charge relay system in catalysis.

Belongs to the peptidase S1 family. Tryptase subfamily. In terms of assembly, homotetramer. In terms of processing, glycosylated. Mast cells.

It is found in the secreted. The enzyme catalyses Preferential cleavage: Arg-|-Xaa, Lys-|-Xaa, but with more restricted specificity than trypsin.. Its function is as follows. Tryptase is the major neutral protease present in mast cells and is secreted upon the coupled activation-degranulation response of this cell type. May play a role in innate immunity. This Rattus norvegicus (Rat) protein is Tryptase (Tpsab1).